The sequence spans 327 residues: MRKKIIATVIGTSALAAVTWTNADAATTYKVKSGDSLWSIANKYNMSVAKLKSLNNLTSNVIFPNQSLKVSGSTSSSTSSNTSTGSTYTVKSGDTLSGIAAKYGTTYQKIMSLNGLSNFNIYPGQKLKVSGAASSSSSNTSGNTSSGSTTTYTVKSGDSLSAIAAKYGTTYQKIMSLNGLTNFNIYPGQKLKVSGKASTGGSGSSSTGSAGYKTPVFNHSNLYDWGQCTWHVFNKRAQIGKGISTYWWNANNWDTAAAADGYTIDRKATVGSILQSDMGYYGHVAFVESVNANGSITISEMNYSASPGIVTYRTIPASQVSSYVYIH.

A signal peptide spans 1-25; sequence MRKKIIATVIGTSALAAVTWTNADA. LysM domains are found at residues 27–70, 86–129, and 150–193; these read TTYK…SLKV, STYT…KLKV, and TTYT…KLKV. The interval 68–89 is disordered; it reads LKVSGSTSSSTSSNTSTGSTYT. Positions 71-87 are enriched in low complexity; that stretch reads SGSTSSSTSSNTSTGST. Positions 203–327 constitute a Peptidase C51 domain; sequence GSSSTGSAGY…SQVSSYVYIH (125 aa).

The protein localises to the secreted. The protein resides in the cell surface. It catalyses the reaction Hydrolyzes the link between N-acetylmuramoyl residues and L-amino acid residues in certain cell-wall glycopeptides.. In terms of biological role, peptidoglycan hydrolase involved in the splitting of the septum during cell division. This is N-acetylmuramoyl-L-alanine amidase sle1 (sle1) from Staphylococcus saprophyticus subsp. saprophyticus (strain ATCC 15305 / DSM 20229 / NCIMB 8711 / NCTC 7292 / S-41).